Consider the following 102-residue polypeptide: Noncompact myelin-associated protein (102 aa).

Topologically, residues 1-30 are extracellular; that stretch reads MTTATPLGDTTFFSLNMTTRGEDFLYKSSG. The helical transmembrane segment at 31-51 threads the bilayer; sequence AIVAAVVVVVIIIFTVVLILL. The Cytoplasmic segment spans residues 52–102; that stretch reads KMYNRKMRTRRELEPKGPKPTAPSAVGPNSNGSQHPATVTFSPVDVQVETR. Positions 60 to 102 are disordered; that stretch reads TRRELEPKGPKPTAPSAVGPNSNGSQHPATVTFSPVDVQVETR. Over residues 78 to 92 the composition is skewed to polar residues; the sequence is GPNSNGSQHPATVTF.

In terms of processing, glycosylated.

Its subcellular location is the cell membrane. In terms of biological role, plays a role in myelin formation. The sequence is that of Noncompact myelin-associated protein (NCMAP) from Homo sapiens (Human).